The following is a 131-amino-acid chain: Translation initiation factor 5A (131 aa).

A Hypusine modification is found at lysine 36.

This sequence belongs to the eIF-5A family.

It localises to the cytoplasm. Functions by promoting the formation of the first peptide bond. The protein is Translation initiation factor 5A (eIF5A) of Saccharolobus islandicus (strain Y.N.15.51 / Yellowstone #2) (Sulfolobus islandicus).